A 1032-amino-acid chain; its full sequence is Importin beta-like protein KAP120 (1032 aa).

N-acetylalanine is present on Ala-2. One can recognise an Importin N-terminal domain in the interval 31-103 (AEQQLRQWET…RGRLFEMIDE (73 aa)).

Belongs to the importin beta family. As to quaternary structure, interacts with GTP-bound GSP1 and RFP1. Associates with the nuclear pore complex.

It is found in the cytoplasm. The protein resides in the nucleus. Its function is as follows. Functions in nuclear protein import as nuclear transport receptor. Serves as receptor for nuclear localization signals (NLS) in cargo substrates. Thought to mediate docking of the importin/substrate complex to the nuclear pore complex (NPC) through binding to nucleoporin and the complex is subsequently translocated through the pore by an energy requiring, RAN-dependent mechanism. Required for nuclear import of Ho endonuclease and RFP1, and involved in rRNA-processing and assembly or export of 60S ribosomal subunits. This chain is Importin beta-like protein KAP120 (KAP120), found in Saccharomyces cerevisiae (strain ATCC 204508 / S288c) (Baker's yeast).